The primary structure comprises 104 residues: Integration host factor subunit alpha (104 aa).

The protein belongs to the bacterial histone-like protein family. In terms of assembly, heterodimer of an alpha and a beta chain.

Functionally, this protein is one of the two subunits of integration host factor, a specific DNA-binding protein that functions in genetic recombination as well as in transcriptional and translational control. The chain is Integration host factor subunit alpha from Bartonella quintana (strain Toulouse) (Rochalimaea quintana).